Here is a 305-residue protein sequence, read N- to C-terminus: Protoheme IX farnesyltransferase (305 aa).

A run of 9 helical transmembrane segments spans residues 38-58 (FITT…SFLG), 60-80 (LDIV…SCAI), 110-130 (AYAF…MTTV), 131-151 (TSAV…TMWS), 161-181 (IGSV…TGTI), 185-205 (AWVL…SLAI), 227-247 (VTKR…FFLG), 249-269 (LGWP…VIGL), and 285-305 (FVYS…ITLF).

The protein belongs to the UbiA prenyltransferase family. Protoheme IX farnesyltransferase subfamily. In terms of assembly, interacts with CtaA.

The protein resides in the cell membrane. It carries out the reaction heme b + (2E,6E)-farnesyl diphosphate + H2O = Fe(II)-heme o + diphosphate. Its pathway is porphyrin-containing compound metabolism; heme O biosynthesis; heme O from protoheme: step 1/1. Functionally, converts heme B (protoheme IX) to heme O by substitution of the vinyl group on carbon 2 of heme B porphyrin ring with a hydroxyethyl farnesyl side group. This is Protoheme IX farnesyltransferase from Bacillus pumilus (strain SAFR-032).